The sequence spans 483 residues: MHQLTLAEIARGLADKSFSSEELTGALLARIKQLDPQINSFISVTEDLALGQARAADARRAAGETSALLGAPIAHKDLFCTNGVRTSCGSKMLDNFKAPYDATVVAKLAEAGMVTLGKTNMDEFAMGSANESSHYGAVKNPWNLEHVPGGSSGGSAAAVAARLLPATTGTDTGGSIRQPAALTNLTGLKPTYGRVSRWGMIAYASSLDQGGPLARTAEDCALLLQGMAGFDAKDSTSIEEPVPDYSASLNASLQGLRIGLPKEYFGAGLDPRIADLVQASVKELEKLGAVVKEISLPNMQHAIPAYYVIAPAEASSNLSRFDGVRFGYRCEEPKDLTDLYKRSRGEGFGVEVQRRIMVGTYALSAGYYDAYYVKAQQIRRLIKNDFMAAFNDVDLILGPTTPNPAWKLGAKSSDPVAAYLEDVYTITANLAGLPGLSMPAGFVDGLPVGVQLLAPYFQEGRLLNVAHRYQQVTDWHTRAPNGF.

Catalysis depends on charge relay system residues Lys-76 and Ser-151. The Acyl-ester intermediate role is filled by Ser-175.

It belongs to the amidase family. GatA subfamily. In terms of assembly, heterotrimer of A, B and C subunits.

It catalyses the reaction L-glutamyl-tRNA(Gln) + L-glutamine + ATP + H2O = L-glutaminyl-tRNA(Gln) + L-glutamate + ADP + phosphate + H(+). In terms of biological role, allows the formation of correctly charged Gln-tRNA(Gln) through the transamidation of misacylated Glu-tRNA(Gln) in organisms which lack glutaminyl-tRNA synthetase. The reaction takes place in the presence of glutamine and ATP through an activated gamma-phospho-Glu-tRNA(Gln). In Pseudomonas putida (strain ATCC 47054 / DSM 6125 / CFBP 8728 / NCIMB 11950 / KT2440), this protein is Glutamyl-tRNA(Gln) amidotransferase subunit A.